The following is a 528-amino-acid chain: D-3-phosphoglycerate dehydrogenase (528 aa).

NAD(+) is bound by residues 151-152 (RI), D171, 230-232 (AAR), and D256. Residue R232 is part of the active site. The active site involves E261. Catalysis depends on H279, which acts as the Proton donor. 279 to 282 (HLGA) is a binding site for NAD(+). Residues 455-527 (NLIIHYVDRP…DAYKLEVVDL (73 aa)) form the ACT domain.

This sequence belongs to the D-isomer specific 2-hydroxyacid dehydrogenase family.

The enzyme catalyses (2R)-3-phosphoglycerate + NAD(+) = 3-phosphooxypyruvate + NADH + H(+). It carries out the reaction (R)-2-hydroxyglutarate + NAD(+) = 2-oxoglutarate + NADH + H(+). It functions in the pathway amino-acid biosynthesis; L-serine biosynthesis; L-serine from 3-phospho-D-glycerate: step 1/3. In terms of biological role, catalyzes the reversible oxidation of 3-phospho-D-glycerate to 3-phosphonooxypyruvate, the first step of the phosphorylated L-serine biosynthesis pathway. Also catalyzes the reversible oxidation of 2-hydroxyglutarate to 2-oxoglutarate. This chain is D-3-phosphoglycerate dehydrogenase (serA), found in Mycobacterium bovis (strain ATCC BAA-935 / AF2122/97).